Consider the following 122-residue polypeptide: Large ribosomal subunit protein uL22 (122 aa).

Belongs to the universal ribosomal protein uL22 family. In terms of assembly, part of the 50S ribosomal subunit.

Functionally, this protein binds specifically to 23S rRNA; its binding is stimulated by other ribosomal proteins, e.g. L4, L17, and L20. It is important during the early stages of 50S assembly. It makes multiple contacts with different domains of the 23S rRNA in the assembled 50S subunit and ribosome. Its function is as follows. The globular domain of the protein is located near the polypeptide exit tunnel on the outside of the subunit, while an extended beta-hairpin is found that lines the wall of the exit tunnel in the center of the 70S ribosome. The chain is Large ribosomal subunit protein uL22 from Prochlorococcus marinus (strain MIT 9303).